A 431-amino-acid chain; its full sequence is Enolase (431 aa).

Residue Gln167 coordinates (2R)-2-phosphoglycerate. Glu209 acts as the Proton donor in catalysis. Positions 246, 289, and 316 each coordinate Mg(2+). (2R)-2-phosphoglycerate contacts are provided by Lys341, Arg370, Ser371, and Lys392. Lys341 (proton acceptor) is an active-site residue.

Belongs to the enolase family. As to quaternary structure, component of the RNA degradosome, a multiprotein complex involved in RNA processing and mRNA degradation. It depends on Mg(2+) as a cofactor.

The protein localises to the cytoplasm. It localises to the secreted. It is found in the cell surface. The enzyme catalyses (2R)-2-phosphoglycerate = phosphoenolpyruvate + H2O. It functions in the pathway carbohydrate degradation; glycolysis; pyruvate from D-glyceraldehyde 3-phosphate: step 4/5. Catalyzes the reversible conversion of 2-phosphoglycerate (2-PG) into phosphoenolpyruvate (PEP). It is essential for the degradation of carbohydrates via glycolysis. In Shewanella sp. (strain MR-4), this protein is Enolase.